The sequence spans 93 residues: Large ribosomal subunit protein uL23cz/uL23cy (93 aa).

It belongs to the universal ribosomal protein uL23 family. In terms of assembly, part of the 50S ribosomal subunit.

Its subcellular location is the plastid. The protein resides in the chloroplast. Its function is as follows. Binds to 23S rRNA. This chain is Large ribosomal subunit protein uL23cz/uL23cy (rpl23-A), found in Panax ginseng (Korean ginseng).